A 340-amino-acid polypeptide reads, in one-letter code: Dihydroorotate dehydrogenase (quinone) (340 aa).

FMN is bound by residues 61–65 and threonine 85; that span reads AGLDK. Position 65 (lysine 65) interacts with substrate. Position 110–114 (110–114) interacts with substrate; the sequence is NRMGF. 2 residues coordinate FMN: asparagine 138 and asparagine 171. Residue asparagine 171 coordinates substrate. Residue serine 174 is the Nucleophile of the active site. Asparagine 176 contacts substrate. 2 residues coordinate FMN: lysine 216 and threonine 244. 245–246 is a substrate binding site; the sequence is NT. FMN is bound by residues glycine 267, glycine 296, and 317-318; that span reads YS.

Belongs to the dihydroorotate dehydrogenase family. Type 2 subfamily. Monomer. Requires FMN as cofactor.

It localises to the cell membrane. The catalysed reaction is (S)-dihydroorotate + a quinone = orotate + a quinol. The protein operates within pyrimidine metabolism; UMP biosynthesis via de novo pathway; orotate from (S)-dihydroorotate (quinone route): step 1/1. Functionally, catalyzes the conversion of dihydroorotate to orotate with quinone as electron acceptor. This chain is Dihydroorotate dehydrogenase (quinone), found in Ectopseudomonas mendocina (strain ymp) (Pseudomonas mendocina).